We begin with the raw amino-acid sequence, 398 residues long: Cysteine protease ATG4A (398 aa).

Catalysis depends on C77, which acts as the Nucleophile. Active-site residues include D279 and H281. The LIR signature appears at 393 to 396 (FEIL).

This sequence belongs to the peptidase C54 family. As to quaternary structure, interacts with ATG9A; the interaction is direct.

The protein localises to the cytoplasm. It carries out the reaction [protein]-C-terminal L-amino acid-glycyl-phosphatidylethanolamide + H2O = [protein]-C-terminal L-amino acid-glycine + a 1,2-diacyl-sn-glycero-3-phosphoethanolamine. Inhibited by N-ethylmaleimide. Redox-regulated during autophagy since reducing conditions activate ATG4A whereas an oxidizing environment such as the presence of H(2)O(2) inhibits its activity. Its function is as follows. Cysteine protease that plays a key role in autophagy by mediating both proteolytic activation and delipidation of ATG8 family proteins. The protease activity is required for proteolytic activation of ATG8 family proteins: cleaves the C-terminal amino acid of ATG8 proteins to reveal a C-terminal glycine. Exposure of the glycine at the C-terminus is essential for ATG8 proteins conjugation to phosphatidylethanolamine (PE) and insertion to membranes, which is necessary for autophagy. Preferred substrate is GABARAPL2 followed by MAP1LC3A and GABARAP. Protease activity is also required to counteract formation of high-molecular weight conjugates of ATG8 proteins (ATG8ylation): acts as a deubiquitinating-like enzyme that removes ATG8 conjugated to other proteins, such as ATG3. In addition to the protease activity, also mediates delipidation of ATG8 family proteins. Catalyzes delipidation of PE-conjugated forms of ATG8 proteins during macroautophagy. Compared to ATG4B, the major protein for proteolytic activation of ATG8 proteins, shows weaker ability to cleave the C-terminal amino acid of ATG8 proteins, while it displays stronger delipidation activity. Involved in phagophore growth during mitophagy independently of its protease activity and of ATG8 proteins: acts by regulating ATG9A trafficking to mitochondria and promoting phagophore-endoplasmic reticulum contacts during the lipid transfer phase of mitophagy. The sequence is that of Cysteine protease ATG4A from Pongo abelii (Sumatran orangutan).